A 176-amino-acid chain; its full sequence is Adenine phosphoribosyltransferase (176 aa).

This sequence belongs to the purine/pyrimidine phosphoribosyltransferase family. Homodimer.

The protein resides in the cytoplasm. It carries out the reaction AMP + diphosphate = 5-phospho-alpha-D-ribose 1-diphosphate + adenine. It participates in purine metabolism; AMP biosynthesis via salvage pathway; AMP from adenine: step 1/1. Functionally, catalyzes a salvage reaction resulting in the formation of AMP, that is energically less costly than de novo synthesis. The sequence is that of Adenine phosphoribosyltransferase from Borreliella burgdorferi (strain ZS7) (Borrelia burgdorferi).